The following is a 476-amino-acid chain: Aspartyl/glutamyl-tRNA(Asn/Gln) amidotransferase subunit B (476 aa).

It belongs to the GatB/GatE family. GatB subfamily. Heterotrimer of A, B and C subunits.

It catalyses the reaction L-glutamyl-tRNA(Gln) + L-glutamine + ATP + H2O = L-glutaminyl-tRNA(Gln) + L-glutamate + ADP + phosphate + H(+). The enzyme catalyses L-aspartyl-tRNA(Asn) + L-glutamine + ATP + H2O = L-asparaginyl-tRNA(Asn) + L-glutamate + ADP + phosphate + 2 H(+). Its function is as follows. Allows the formation of correctly charged Asn-tRNA(Asn) or Gln-tRNA(Gln) through the transamidation of misacylated Asp-tRNA(Asn) or Glu-tRNA(Gln) in organisms which lack either or both of asparaginyl-tRNA or glutaminyl-tRNA synthetases. The reaction takes place in the presence of glutamine and ATP through an activated phospho-Asp-tRNA(Asn) or phospho-Glu-tRNA(Gln). In Enterococcus faecalis (strain ATCC 700802 / V583), this protein is Aspartyl/glutamyl-tRNA(Asn/Gln) amidotransferase subunit B.